Here is a 410-residue protein sequence, read N- to C-terminus: Multifunctional CCA protein (410 aa).

ATP-binding residues include Gly-8 and Arg-11. Gly-8 and Arg-11 together coordinate CTP. Residues Asp-21 and Asp-23 each contribute to the Mg(2+) site. Residues Arg-91, Arg-143, and Arg-146 each contribute to the ATP site. CTP contacts are provided by Arg-91, Arg-143, and Arg-146. Positions 232 to 333 (TGVHVMMVVD…VRLLERSDAI (102 aa)) constitute an HD domain.

It belongs to the tRNA nucleotidyltransferase/poly(A) polymerase family. Bacterial CCA-adding enzyme type 1 subfamily. Monomer. Can also form homodimers and oligomers. Requires Mg(2+) as cofactor. It depends on Ni(2+) as a cofactor.

It catalyses the reaction a tRNA precursor + 2 CTP + ATP = a tRNA with a 3' CCA end + 3 diphosphate. The catalysed reaction is a tRNA with a 3' CCA end + 2 CTP + ATP = a tRNA with a 3' CCACCA end + 3 diphosphate. Functionally, catalyzes the addition and repair of the essential 3'-terminal CCA sequence in tRNAs without using a nucleic acid template. Adds these three nucleotides in the order of C, C, and A to the tRNA nucleotide-73, using CTP and ATP as substrates and producing inorganic pyrophosphate. tRNA 3'-terminal CCA addition is required both for tRNA processing and repair. Also involved in tRNA surveillance by mediating tandem CCA addition to generate a CCACCA at the 3' terminus of unstable tRNAs. While stable tRNAs receive only 3'-terminal CCA, unstable tRNAs are marked with CCACCA and rapidly degraded. In Paraburkholderia phytofirmans (strain DSM 17436 / LMG 22146 / PsJN) (Burkholderia phytofirmans), this protein is Multifunctional CCA protein.